A 433-amino-acid polypeptide reads, in one-letter code: uncharacterized protein (433 aa).

The protein resides in the virion. This is an uncharacterized protein from Acanthamoeba polyphaga (Amoeba).